The primary structure comprises 299 residues: Probable tyrosine phosphatase protein J4 (299 aa).

Residues 16 to 289 form the Tyrosine-protein phosphatase domain; sequence VEALDFLSFM…VYCYQALYVW (274 aa). Catalysis depends on Cys-230, which acts as the Phosphocysteine intermediate.

This sequence belongs to the protein-tyrosine phosphatase family.

It catalyses the reaction O-phospho-L-tyrosyl-[protein] + H2O = L-tyrosyl-[protein] + phosphate. This Microplitis demolitor bracovirus (isolate Webb) (MdBV) protein is Probable tyrosine phosphatase protein J4 (J5).